Consider the following 172-residue polypeptide: MSEENQVAATEAEEQTPFELQIQRIYIKDVSFEAPNLPTIFHQEWKPQLGFELDTETVKLADDLYEVILHINVSTTLEDSGDTAFICEVKQAGVFTIKGLEGIQLAHCLASQCPSVLYPYARELIASLVNRGTFPALNLSPVNFDALFVDYLQRQEQEAAEAEEETPAPASN.

The protein belongs to the SecB family. Homotetramer, a dimer of dimers. One homotetramer interacts with 1 SecA dimer.

It localises to the cytoplasm. In terms of biological role, one of the proteins required for the normal export of preproteins out of the cell cytoplasm. It is a molecular chaperone that binds to a subset of precursor proteins, maintaining them in a translocation-competent state. It also specifically binds to its receptor SecA. This chain is Protein-export protein SecB, found in Haemophilus ducreyi (strain 35000HP / ATCC 700724).